A 100-amino-acid polypeptide reads, in one-letter code: Small ribosomal subunit protein bS18c (100 aa).

Basic residues predominate over residues 1–19 (MDKSKRPFRKSKRSFRRRL). The interval 1–23 (MDKSKRPFRKSKRSFRRRLPPIG) is disordered.

This sequence belongs to the bacterial ribosomal protein bS18 family. In terms of assembly, part of the 30S ribosomal subunit.

Its subcellular location is the plastid. It localises to the chloroplast. The sequence is that of Small ribosomal subunit protein bS18c from Calycanthus floridus var. glaucus (Eastern sweetshrub).